Consider the following 175-residue polypeptide: Adenine phosphoribosyltransferase (175 aa).

Belongs to the purine/pyrimidine phosphoribosyltransferase family. In terms of assembly, homodimer.

The protein resides in the cytoplasm. It catalyses the reaction AMP + diphosphate = 5-phospho-alpha-D-ribose 1-diphosphate + adenine. Its pathway is purine metabolism; AMP biosynthesis via salvage pathway; AMP from adenine: step 1/1. Catalyzes a salvage reaction resulting in the formation of AMP, that is energically less costly than de novo synthesis. The chain is Adenine phosphoribosyltransferase from Francisella philomiragia subsp. philomiragia (strain ATCC 25017 / CCUG 19701 / FSC 153 / O#319-036).